Consider the following 329-residue polypeptide: Phenylalanine--tRNA ligase alpha subunit (329 aa).

The protein belongs to the class-II aminoacyl-tRNA synthetase family. Phe-tRNA synthetase alpha subunit type 1 subfamily. In terms of assembly, tetramer of two alpha and two beta subunits. Mg(2+) is required as a cofactor.

The protein localises to the cytoplasm. It carries out the reaction tRNA(Phe) + L-phenylalanine + ATP = L-phenylalanyl-tRNA(Phe) + AMP + diphosphate + H(+). The chain is Phenylalanine--tRNA ligase alpha subunit (pheS) from Buchnera aphidicola subsp. Acyrthosiphon pisum (strain APS) (Acyrthosiphon pisum symbiotic bacterium).